The chain runs to 312 residues: Olfactory receptor 1D5 (312 aa).

Topologically, residues 1–25 are extracellular; it reads MDGDNQSENSQFLLLGISESPEQQQ. Residue Asn-5 is glycosylated (N-linked (GlcNAc...) asparagine). The helical transmembrane segment at 26–49 threads the bilayer; sequence ILFWMFLSMYLVTVLGNVLIILAI. The Cytoplasmic segment spans residues 50-57; that stretch reads SSDSHLHT. A helical membrane pass occupies residues 58–79; sequence PMYFFLANLSFTDLFFVTNTIP. Residues 80–100 lie on the Extracellular side of the membrane; that stretch reads KMLVNFQSQNKAISYAGCLTQ. Cys-97 and Cys-189 are disulfide-bonded. A helical transmembrane segment spans residues 101-120; the sequence is LYFLVSLVTLDNLILAVMAY. The Cytoplasmic segment spans residues 121–140; that stretch reads DRYVAICCPLHYVTAMSPGL. Residues 141 to 158 form a helical membrane-spanning segment; the sequence is CVLLLSLCWGLSVLYGLL. Topologically, residues 159-196 are extracellular; the sequence is LTLLLTRVTFCGPREIHYLFCDMYILLRLACSNTHIIH. Residues 197–220 traverse the membrane as a helical segment; the sequence is TVLVATGCFIFLTPLGFMTTSYVC. At 221–237 the chain is on the cytoplasmic side; the sequence is IVRTILQIPSASKKYKA. The chain crosses the membrane as a helical span at residues 238-260; sequence FSTCASHLGVVSLFYGTLAMVYL. Over 261–271 the chain is Extracellular; the sequence is QPLHTYSMKDS. The chain crosses the membrane as a helical span at residues 272–291; sequence VATVMYAVVTPMMNPFIYSL. The Cytoplasmic portion of the chain corresponds to 292 to 312; sequence RNKDMHGALGRVLRRLFQRPK.

It belongs to the G-protein coupled receptor 1 family.

It localises to the cell membrane. Functionally, odorant receptor. The polypeptide is Olfactory receptor 1D5 (OR1D5) (Pan paniscus (Pygmy chimpanzee)).